The primary structure comprises 794 residues: Cadherin-12 (794 aa).

The signal sequence occupies residues 1-23 (MLTRNCLSLLLWVLFDGGLLTPL). A propeptide spanning residues 24 to 54 (QPQPQQTLATEPRENVIHLPGQRSHFQRVKR) is cleaved from the precursor. Cadherin domains follow at residues 55–160 (GWVW…EPKF), 161–269 (LDGP…PPRF), 270–384 (PKSI…PPVF), 385–487 (SKPL…EFPP), and 488–609 (EISV…IFLP). Residues 55–609 (GWVWNQFFVL…SCNVEAIFLP (555 aa)) are Extracellular-facing. The N-linked (GlcNAc...) asparagine glycan is linked to Asn256. 3 N-linked (GlcNAc...) asparagine glycosylation sites follow: Asn456, Asn537, and Asn545. Residues 610 to 637 (VGLSTGALIAILLCIVILLAIVVLYVAL) traverse the membrane as a helical segment. Residues 638 to 794 (RRQKKKDTLM…EESYNPDKVT (157 aa)) lie on the Cytoplasmic side of the membrane. Position 787 is a phosphoserine (Ser787).

In terms of tissue distribution, brain.

The protein localises to the cell membrane. Its function is as follows. Cadherins are calcium-dependent cell adhesion proteins. They preferentially interact with themselves in a homophilic manner in connecting cells; cadherins may thus contribute to the sorting of heterogeneous cell types. This is Cadherin-12 (CDH12) from Homo sapiens (Human).